Reading from the N-terminus, the 398-residue chain is Succinate--CoA ligase [ADP-forming] subunit beta (398 aa).

One can recognise an ATP-grasp domain in the interval 9 to 254; sequence KALLKSFGAP…KTEEDAKEIE (246 aa). ATP is bound by residues Lys46, 53-55, Glu109, Ala112, and Glu117; that span reads GRG. Mg(2+)-binding residues include Asn209 and Asp223. Residues Asn274 and 331–333 contribute to the substrate site; that span reads GIM.

It belongs to the succinate/malate CoA ligase beta subunit family. As to quaternary structure, heterotetramer of two alpha and two beta subunits. Mg(2+) serves as cofactor.

It catalyses the reaction succinate + ATP + CoA = succinyl-CoA + ADP + phosphate. The catalysed reaction is GTP + succinate + CoA = succinyl-CoA + GDP + phosphate. Its pathway is carbohydrate metabolism; tricarboxylic acid cycle; succinate from succinyl-CoA (ligase route): step 1/1. Succinyl-CoA synthetase functions in the citric acid cycle (TCA), coupling the hydrolysis of succinyl-CoA to the synthesis of either ATP or GTP and thus represents the only step of substrate-level phosphorylation in the TCA. The beta subunit provides nucleotide specificity of the enzyme and binds the substrate succinate, while the binding sites for coenzyme A and phosphate are found in the alpha subunit. The polypeptide is Succinate--CoA ligase [ADP-forming] subunit beta (Allorhizobium ampelinum (strain ATCC BAA-846 / DSM 112012 / S4) (Agrobacterium vitis (strain S4))).